The primary structure comprises 545 residues: La-related protein 6B (545 aa).

Polar residues predominate over residues 1-10 (MADQQTLDSS). Disordered regions lie at residues 1–76 (MADQ…IPPP), 105–187 (LVPV…DSKT), and 382–545 (HQTK…VQAE). The span at 23-49 (SHSTSSTTSASSSSDPSLLRSLSLSRL) shows a compositional bias: low complexity. A compositionally biased stretch (pro residues) spans 61 to 76 (TTPPLPQPPRMIIPPP). Residues 111-126 (HHPHHRFHQHHHHNRH) are compositionally biased toward basic residues. Over residues 154–173 (LVSKKNDRRDHSKRESKNDQ) the composition is skewed to basic and acidic residues. Positions 174-185 (VTETGASVSIDS) are enriched in polar residues. The 92-residue stretch at 187–278 (TGLPEDSIQK…RRISPITESA (92 aa)) folds into the HTH La-type RNA-binding domain. An RRM domain is found at 285-383 (RIIVAENLPE…LKVRLMLKHQ (99 aa)). Over residues 448–464 (GQRKGRNRGRGKGRGRG) the composition is skewed to basic residues. Low complexity predominate over residues 465–478 (QPHQNQNQNNNHSH). Basic residues predominate over residues 479–497 (NQNHNHNGRGNHHHHHHHQ). A compositionally biased stretch (polar residues) spans 498–509 (VGTQPSNNPMNN). Residues 510–519 (MEQPGMGKQQ) show a composition bias toward low complexity.

The protein localises to the nucleus. Its function is as follows. Transcriptional regulator. The polypeptide is La-related protein 6B (LARP6B) (Arabidopsis thaliana (Mouse-ear cress)).